The primary structure comprises 209 residues: Peroxynitrite isomerase 2 (209 aa).

The GXWXGXG motif lies at 56-62 (GVWRGEG). Heme b-binding residues include Lys172 and His199.

This sequence belongs to the nitrobindin family. As to quaternary structure, homodimer. Heme b is required as a cofactor.

The enzyme catalyses peroxynitrite = nitrate. The protein operates within nitrogen metabolism. In terms of biological role, heme-binding protein able to scavenge peroxynitrite and to protect free L-tyrosine against peroxynitrite-mediated nitration, by acting as a peroxynitrite isomerase that converts peroxynitrite to nitrate. Therefore, this protein likely plays a role in peroxynitrite sensing and in the detoxification of reactive nitrogen and oxygen species (RNS and ROS, respectively). Is able to bind nitric oxide (NO) in vitro, but may act as a sensor of peroxynitrite levels in vivo. This Mycolicibacterium vanbaalenii (strain DSM 7251 / JCM 13017 / BCRC 16820 / KCTC 9966 / NRRL B-24157 / PYR-1) (Mycobacterium vanbaalenii) protein is Peroxynitrite isomerase 2.